Consider the following 638-residue polypeptide: 1,4-alpha-glucan branching enzyme GlgB (638 aa).

The active-site Nucleophile is aspartate 320. Residue glutamate 373 is the Proton donor of the active site.

This sequence belongs to the glycosyl hydrolase 13 family. GlgB subfamily. As to quaternary structure, monomer.

The enzyme catalyses Transfers a segment of a (1-&gt;4)-alpha-D-glucan chain to a primary hydroxy group in a similar glucan chain.. It functions in the pathway glycan biosynthesis; glycogen biosynthesis. Catalyzes the formation of the alpha-1,6-glucosidic linkages in glycogen by scission of a 1,4-alpha-linked oligosaccharide from growing alpha-1,4-glucan chains and the subsequent attachment of the oligosaccharide to the alpha-1,6 position. The sequence is that of 1,4-alpha-glucan branching enzyme GlgB from Oleidesulfovibrio alaskensis (strain ATCC BAA-1058 / DSM 17464 / G20) (Desulfovibrio alaskensis).